An 806-amino-acid polypeptide reads, in one-letter code: MLISKKTLGVLIPDIFSFSNDQIAQKLEQMGIEVESIKQFNSPDYLQLAKVVSIQPHPHDNKLFICELQIDKNKFINVVSNANNINNPDNINKFVIVAKKGTELLNGLIVKTQNIKGIISEGILCSYIDINPFSRQIIEKTEVADAIIIDHVSNDHDWNQYLSFLSLDDVIFDVKTPTNRADLHSLIFLAKELGVLLKTKTFLKQKSSVVNHDFFKFPLNLKNKLKANYFGGLFLRQINQHSSPWTVKGLLINQMIKPVNYYVDKANLVTVFTAQPIHCHDADRIVGNIELKQATHNETFVGLDDKQYEIEPGDIVVCDEKGIIALVGIIGSKRTMVQPTTTNIFFEVVNCNSETIKQTAKRFLINNFASKFMVKPISLLATDNCLNYLQNSLLTTDNIGKISHFSSSLKVEPFSKKLTVNFHKIRQLIGIEKKELTDQTIKKSLSQLGFKVDNQLLKIPSYRQDINTWQDISEEIVKLIDINKLKPIGITSSFNFEKSSYFNTFNALTKLRKKLQTLGFHNVITYQLTDQKSAKTFNLFNLENFITIKNPVSQNHSVMRVSLIDSLLKVLKTNNNYKNELVNIFEFSFIKTQNNSELHLAVLWVEKLFTSSFNPMQGISNDVFTMKGLAKLIVANLGFSCDFEPLDDSDYFVNNQSLKIVVFNEQIGFIGLIKESLLNNYDLNNKPIYCLEINLDRMLSSLNRIEKNYLGYSKLQPVCKDLTFSFTNPASHFDQFANMIKRITGIESWKLISVFETMQNNQLITKYTVRYFLKNDANKPLTNQTIELITNNLKLQCEKLKIKLDI.

Residues 40–153 enclose the tRNA-binding domain; that stretch reads FNSPDYLQLA…ADAIIIDHVS (114 aa). A B5 domain is found at 413–487; the sequence is PFSKKLTVNF…KLIDINKLKP (75 aa). Mg(2+)-binding residues include Asp-465, Asp-471, Glu-474, and Glu-475.

This sequence belongs to the phenylalanyl-tRNA synthetase beta subunit family. Type 1 subfamily. Tetramer of two alpha and two beta subunits. Requires Mg(2+) as cofactor.

The protein localises to the cytoplasm. The catalysed reaction is tRNA(Phe) + L-phenylalanine + ATP = L-phenylalanyl-tRNA(Phe) + AMP + diphosphate + H(+). The sequence is that of Phenylalanine--tRNA ligase beta subunit (pheT) from Mycoplasma genitalium (strain ATCC 33530 / DSM 19775 / NCTC 10195 / G37) (Mycoplasmoides genitalium).